Reading from the N-terminus, the 360-residue chain is Geranylgeranyl pyrophosphate synthase 3, chloroplastic (360 aa).

Residues 1 to 39 (MATTVHLSSFSLFIQSRGRRDNSISSVKSLKKRTGLSPS) constitute a chloroplast transit peptide. Residues 24-54 (ISSVKSLKKRTGLSPSSALTSQGGRDMIPPE) are disordered. The span at 36–46 (LSPSSALTSQG) shows a compositional bias: polar residues. Lys106, Arg109, and His138 together coordinate isopentenyl diphosphate. Mg(2+) is bound by residues Asp145 and Asp151. Arg156 provides a ligand contact to dimethylallyl diphosphate. Arg157 lines the isopentenyl diphosphate pocket. The dimethylallyl diphosphate site is built by Lys245, Thr246, Gln283, Lys300, and Lys310.

This sequence belongs to the FPP/GGPP synthase family. As to quaternary structure, monomer. Mg(2+) is required as a cofactor. As to expression, mainly expressed in roots.

Its subcellular location is the plastid. The protein localises to the chloroplast. The enzyme catalyses isopentenyl diphosphate + dimethylallyl diphosphate = (2E)-geranyl diphosphate + diphosphate. It carries out the reaction isopentenyl diphosphate + (2E)-geranyl diphosphate = (2E,6E)-farnesyl diphosphate + diphosphate. It catalyses the reaction isopentenyl diphosphate + (2E,6E)-farnesyl diphosphate = (2E,6E,10E)-geranylgeranyl diphosphate + diphosphate. The protein operates within isoprenoid biosynthesis; farnesyl diphosphate biosynthesis; farnesyl diphosphate from geranyl diphosphate and isopentenyl diphosphate: step 1/1. Its pathway is isoprenoid biosynthesis; geranyl diphosphate biosynthesis; geranyl diphosphate from dimethylallyl diphosphate and isopentenyl diphosphate: step 1/1. It functions in the pathway isoprenoid biosynthesis; geranylgeranyl diphosphate biosynthesis; geranylgeranyl diphosphate from farnesyl diphosphate and isopentenyl diphosphate: step 1/1. Its function is as follows. Catalyzes the trans-addition of the three molecules of IPP onto DMAPP to form geranylgeranyl pyrophosphate. In Arabidopsis thaliana (Mouse-ear cress), this protein is Geranylgeranyl pyrophosphate synthase 3, chloroplastic (GGPP3).